A 107-amino-acid chain; its full sequence is MKANLGNLMKQAQQMQENMKAMQEKLAAIEVEGQAGAGMVKVTMTCRYDVKRVNIDSSLIGDDKEMLEDLVAAAVNDAVRRVETVTQEKMASVAGGLGLPAGMKFPF.

This sequence belongs to the YbaB/EbfC family. Homodimer.

It localises to the cytoplasm. It is found in the nucleoid. Its function is as follows. Binds to DNA and alters its conformation. May be involved in regulation of gene expression, nucleoid organization and DNA protection. The protein is Nucleoid-associated protein NE0434 of Nitrosomonas europaea (strain ATCC 19718 / CIP 103999 / KCTC 2705 / NBRC 14298).